We begin with the raw amino-acid sequence, 744 residues long: MEAMLVDCVNNSLRHFVYKNAIFMCERLCAEFPSEVNLQLLATSYLQNNQAYSAYHLLKGTQMAQSRYLFALSCFQMDLLNEAESALCPVNEPGAEIPNGAAGHYLLGLIYKYTDRRKNAAQQFKQSLTIDPLLWAAYEELCILGAAEEATAVFGETAALSIQKQYMQQLSTSLGLNTYNEERNSTSTKNTSSEDYSPRQSKHTQSHGLKDISGNFHSHGVNGGVSNMSFYNTPSPVAAQLSGIAPPPLFRNFQPAVANPNSLITDSSPKSTVNSTLQAPRRKFVDEGKLRKISGRLFSDSGPRRSSRLSADSGANINSSVATVSGNVNNASKYLGGSKLSSLALRSVTLRKGHSWANENMDEGVRGEPFDDSRPNTASTTGSMASNDQEDETMSIGGIAMSSQTITIGVSEILNLLRTLGEGCRLSYMYRCQEALDTYMKLPHKHYNTGWVLSQVGKAYFELIDYLEAEKAFRLARLASPYCLEGMDIYSTVLYHLKEDMKLSYLAQELISTDRLAPQSWCAMGNCYSLQKDHETALKNFLRAVQLNPRFAYAHTLCGHEYTTLEDFENGMKSYQNALRVDTRHYNAWYGLGMIYLRQEKLEFSEHHFRMAFLINPSSSVIMSYLGTSLHALKRSEEALEIMEQAIVADRKNPLPMYQKANILVCLERLDEALEVLEELKEYAPSESSVYALMGRIYKRRNMHDKAMLHFGLALDMKPPATDVAAIKAAMEKLHVPDEIDESP.

One copy of the TPR 1 repeat lies at A101 to L134. Over residues N180 to R199 the composition is skewed to polar residues. Disordered regions lie at residues N180–S218 and E359–E390. The span at E363–R374 shows a compositional bias: basic and acidic residues. Polar residues predominate over residues P375–N387. 7 TPR repeats span residues G450–C483, P518–F551, Y553–H585, N587–S619, V621–N653, L655–E687, and S688–A721.

It belongs to the APC3/CDC27 family. As to quaternary structure, the APC/C is composed of at least 10 subunits. Can homodimerize. Interacts with APC2, APC10, FZR2 and FZR3. Interacts with PANS1. Interacts with SAMBA. Specifically expressed in dividing and elongating cells.

The protein localises to the nucleus. The protein operates within protein modification; protein ubiquitination. Functionally, component of the anaphase promoting complex/cyclosome (APC/C), a cell cycle-regulated E3 ubiquitin-protein ligase complex that controls progression through mitosis and the G1 phase of the cell cycle. The APC/C complex controls several key steps in the cell cycle by mediating ubiquitination and subsequent degradation of target proteins such as cyclins. The APC/C complex is required for the female gametophyte development and is involved in several aspect of development by controlling cell division and cell elongation. Involved in the control of endoreduplication. Functionally redundant with CDC27A in the control of gametophyte development. The polypeptide is Cell division cycle protein 27 homolog B (CDC27B) (Arabidopsis thaliana (Mouse-ear cress)).